Here is a 515-residue protein sequence, read N- to C-terminus: Maturase K (515 aa).

This sequence belongs to the intron maturase 2 family. MatK subfamily.

It localises to the plastid. It is found in the chloroplast. Functionally, usually encoded in the trnK tRNA gene intron. Probably assists in splicing its own and other chloroplast group II introns. This chain is Maturase K, found in Picea abies (Norway spruce).